A 124-amino-acid chain; its full sequence is Large ribosomal subunit protein bL12 (124 aa).

It belongs to the bacterial ribosomal protein bL12 family. In terms of assembly, homodimer. Part of the ribosomal stalk of the 50S ribosomal subunit. Forms a multimeric L10(L12)X complex, where L10 forms an elongated spine to which 2 to 4 L12 dimers bind in a sequential fashion. Binds GTP-bound translation factors.

In terms of biological role, forms part of the ribosomal stalk which helps the ribosome interact with GTP-bound translation factors. Is thus essential for accurate translation. In Jannaschia sp. (strain CCS1), this protein is Large ribosomal subunit protein bL12.